The following is a 504-amino-acid chain: Alpha,alpha-trehalose-phosphate synthase [UDP-forming] (504 aa).

Positions 97 and 151 each coordinate D-glucose 6-phosphate. UDP contacts are provided by arginine 287 and lysine 292. Positions 287 and 292 each coordinate UDP-alpha-D-glucose. Arginine 325 contacts D-glucose 6-phosphate. 386–394 (DGMNLVSYE) is a binding site for UDP-alpha-D-glucose. Residue 390-394 (LVSYE) coordinates UDP. The tract at residues 482–504 (AGKLPTKETPVNGETSKLETSSQ) is disordered. Polar residues predominate over residues 493–504 (NGETSKLETSSQ).

Belongs to the glycosyltransferase 20 family.

It catalyses the reaction D-glucose 6-phosphate + UDP-alpha-D-glucose = alpha,alpha-trehalose 6-phosphate + UDP + H(+). It functions in the pathway carbohydrate biosynthesis. In terms of biological role, synthase catalytic subunit of the trehalose synthase complex that catalyzes the production of trehalose from glucose-6-phosphate and UDP-alpha-D-glucose in a two step process. The chain is Alpha,alpha-trehalose-phosphate synthase [UDP-forming] (tpsA) from Emericella nidulans (strain FGSC A4 / ATCC 38163 / CBS 112.46 / NRRL 194 / M139) (Aspergillus nidulans).